The chain runs to 59 residues: Photosystem II reaction center protein K (59 aa).

Residues 1–22 (MLNIFSLICLNSALHSSSFFFA) constitute a propeptide that is removed on maturation. A helical transmembrane segment spans residues 38–58 (MPVIPVLFFLLALVWQAAVSF).

It belongs to the PsbK family. PSII is composed of 1 copy each of membrane proteins PsbA, PsbB, PsbC, PsbD, PsbE, PsbF, PsbH, PsbI, PsbJ, PsbK, PsbL, PsbM, PsbT, PsbX, PsbY, PsbZ, Psb30/Ycf12, at least 3 peripheral proteins of the oxygen-evolving complex and a large number of cofactors. It forms dimeric complexes.

It is found in the plastid. It localises to the chloroplast thylakoid membrane. One of the components of the core complex of photosystem II (PSII). PSII is a light-driven water:plastoquinone oxidoreductase that uses light energy to abstract electrons from H(2)O, generating O(2) and a proton gradient subsequently used for ATP formation. It consists of a core antenna complex that captures photons, and an electron transfer chain that converts photonic excitation into a charge separation. The sequence is that of Photosystem II reaction center protein K from Calycanthus floridus var. glaucus (Eastern sweetshrub).